A 386-amino-acid chain; its full sequence is Delta(7)-sterol 5(6)-desaturase ERG3 (386 aa).

A run of 3 helical transmembrane segments spans residues 120-140 (LSLF…VAYL), 172-192 (IPVM…GYSF), and 206-226 (AILW…YFLH). A Fatty acid hydroxylase domain is found at 214-337 (FILFTDCGIY…FTTLWDRLGN (124 aa)). A Histidine box-1 motif is present at residues 226–230 (HRWLH). The Histidine box-2 motif lies at 239 to 243 (HKPHH). Residues 272–292 (PLLFPLHKVLYLFLFTFVNFW) form a helical membrane-spanning segment. Positions 314-318 (HTVHH) match the Histidine box-3 motif.

Belongs to the sterol desaturase family. The cofactor is Fe cation.

Its subcellular location is the endoplasmic reticulum membrane. The enzyme catalyses a Delta(7)-sterol + 2 Fe(II)-[cytochrome b5] + O2 + 2 H(+) = a Delta(5),Delta(7)-sterol + 2 Fe(III)-[cytochrome b5] + 2 H2O. It functions in the pathway steroid metabolism; ergosterol biosynthesis; ergosterol from zymosterol: step 3/5. Functionally, C-5 sterol desaturase; part of the third module of ergosterol biosynthesis pathway that includes the late steps of the pathwa. ERG3 catalyzes the introduction of a C-5 double bond in the B ring to produce 5-dehydroepisterol. The third module or late pathway involves the ergosterol synthesis itself through consecutive reactions that mainly occur in the endoplasmic reticulum (ER) membrane. Firstly, the squalene synthase ERG9 catalyzes the condensation of 2 farnesyl pyrophosphate moieties to form squalene, which is the precursor of all steroids. Squalene synthase is crucial for balancing the incorporation of farnesyl diphosphate (FPP) into sterol and nonsterol isoprene synthesis. Secondly, the squalene epoxidase ERG1 catalyzes the stereospecific oxidation of squalene to (S)-2,3-epoxysqualene, which is considered to be a rate-limiting enzyme in steroid biosynthesis. Then, the lanosterol synthase ERG7 catalyzes the cyclization of (S)-2,3 oxidosqualene to lanosterol, a reaction that forms the sterol core. In the next steps, lanosterol is transformed to zymosterol through a complex process involving various demethylation, reduction and desaturation reactions. The lanosterol 14-alpha-demethylase ERG11 (also known as CYP51) catalyzes C14-demethylation of lanosterol to produce 4,4'-dimethyl cholesta-8,14,24-triene-3-beta-ol, which is critical for ergosterol biosynthesis. The C-14 reductase ERG24 reduces the C14=C15 double bond of 4,4-dimethyl-cholesta-8,14,24-trienol to produce 4,4-dimethyl-cholesta-8,24-dienol. 4,4-dimethyl-cholesta-8,24-dienol is substrate of the C-4 demethylation complex ERG25-ERG26-ERG27 in which ERG25 catalyzes the three-step monooxygenation required for the demethylation of 4,4-dimethyl and 4alpha-methylsterols, ERG26 catalyzes the oxidative decarboxylation that results in a reduction of the 3-beta-hydroxy group at the C-3 carbon to an oxo group, and ERG27 is responsible for the reduction of the keto group on the C-3. ERG28 has a role as a scaffold to help anchor ERG25, ERG26 and ERG27 to the endoplasmic reticulum and ERG29 regulates the activity of the iron-containing C4-methylsterol oxidase ERG25. Then, the sterol 24-C-methyltransferase ERG6 catalyzes the methyl transfer from S-adenosyl-methionine to the C-24 of zymosterol to form fecosterol. The C-8 sterol isomerase ERG2 catalyzes the reaction which results in unsaturation at C-7 in the B ring of sterols and thus converts fecosterol to episterol. The sterol-C5-desaturase ERG3 then catalyzes the introduction of a C-5 double bond in the B ring to produce 5-dehydroepisterol. The C-22 sterol desaturase ERG5 further converts 5-dehydroepisterol into ergosta-5,7,22,24(28)-tetraen-3beta-ol by forming the C-22(23) double bond in the sterol side chain. Finally, ergosta-5,7,22,24(28)-tetraen-3beta-ol is substrate of the C-24(28) sterol reductase ERG4 to produce ergosterol. The polypeptide is Delta(7)-sterol 5(6)-desaturase ERG3 (Candida albicans (strain SC5314 / ATCC MYA-2876) (Yeast)).